Consider the following 329-residue polypeptide: MKNIAIIGASGYTGAQITSLINAEMGLSIQGLYVSENSLDKGKALAELYPTYSHIHLCLSPLNDDAKAAIVEQADAVVLATDHVVSLHLAAWFYQQGLAVFDLSGAYRFEALDKYPKWYGFTHEYPQVLADAVYGLAEWNAEKIATSKMIAVPGCYPTASLTALKPLADLLTDVMPVINAVSGVTGAGRKAQLHTSFCEVSLTPYGVLGHRHQPEIATQLGQEVIFTPHLGNFKRGILATITVQLAQGTTAKDIEAAYQCYDNAPLVTVKQNQFPKVDDVVQTPNCLIGWKFDPETNYLVVTSAIDNLMKGAASQALQCIKIHFNELLK.

Residue Cys155 is part of the active site.

It belongs to the NAGSA dehydrogenase family. Type 1 subfamily.

It localises to the cytoplasm. It carries out the reaction N-acetyl-L-glutamate 5-semialdehyde + phosphate + NADP(+) = N-acetyl-L-glutamyl 5-phosphate + NADPH + H(+). Its pathway is amino-acid biosynthesis; L-arginine biosynthesis; N(2)-acetyl-L-ornithine from L-glutamate: step 3/4. Functionally, catalyzes the NADPH-dependent reduction of N-acetyl-5-glutamyl phosphate to yield N-acetyl-L-glutamate 5-semialdehyde. The sequence is that of N-acetyl-gamma-glutamyl-phosphate reductase from Shewanella piezotolerans (strain WP3 / JCM 13877).